We begin with the raw amino-acid sequence, 147 residues long: DNA-directed RNA polymerase subunit 6 homolog (147 aa).

The tract at residues 20-39 (ETEEENFVDSEEESEDKDEI) is disordered.

Belongs to the archaeal RpoK/eukaryotic RPB6 RNA polymerase subunit family. Part of the viral DNA-directed RNA polymerase that consists of 8 polII-like subunits (RPB1, RPB2, RPB3, RPB5, RPB6, RPB7, RPB9, RPB10), a capping enzyme and a termination factor.

Its subcellular location is the host cytoplasm. The protein resides in the virion. Functionally, component of the DNA-directed RNA polymerase (RNAP) that catalyzes the transcription in the cytoplasm of viral DNA into RNA using the four ribonucleoside triphosphates as substrates. This is DNA-directed RNA polymerase subunit 6 homolog from Ornithodoros (relapsing fever ticks).